The sequence spans 473 residues: UDP-N-acetylmuramate--L-alanine ligase (473 aa).

Residue 112 to 118 participates in ATP binding; sequence GTHGKTT.

The protein belongs to the MurCDEF family.

Its subcellular location is the cytoplasm. The enzyme catalyses UDP-N-acetyl-alpha-D-muramate + L-alanine + ATP = UDP-N-acetyl-alpha-D-muramoyl-L-alanine + ADP + phosphate + H(+). It functions in the pathway cell wall biogenesis; peptidoglycan biosynthesis. In terms of biological role, cell wall formation. The chain is UDP-N-acetylmuramate--L-alanine ligase from Nitrosomonas europaea (strain ATCC 19718 / CIP 103999 / KCTC 2705 / NBRC 14298).